Here is a 224-residue protein sequence, read N- to C-terminus: UPF0758 protein BPUM_2444 (224 aa).

The MPN domain maps to 102-224 (VIRTPEDGAN…FVSLKEKGYL (123 aa)). Positions 173, 175, and 186 each coordinate Zn(2+). Positions 173–186 (HNHPSGDPTPSRED) match the JAMM motif motif.

It belongs to the UPF0758 family.

This is UPF0758 protein BPUM_2444 from Bacillus pumilus (strain SAFR-032).